Reading from the N-terminus, the 102-residue chain is MQDNKMKKMLFSAALAMLITGCAQQTFTVGNKPTAVTPKETITHHFFVSPIGQRKLLMQPKFVGGAENVVKTETQQTFVNALPGFITFGIYTPRETRVYCSQ.

Increases serum survival and confers group II surface exclusion. The polypeptide is Protein iss (iss) (Escherichia coli).